Here is a 133-residue protein sequence, read N- to C-terminus: Small ribosomal subunit protein uS8 (133 aa).

Belongs to the universal ribosomal protein uS8 family. In terms of assembly, part of the 30S ribosomal subunit. Contacts proteins S5 and S12.

Its function is as follows. One of the primary rRNA binding proteins, it binds directly to 16S rRNA central domain where it helps coordinate assembly of the platform of the 30S subunit. This Amoebophilus asiaticus (strain 5a2) protein is Small ribosomal subunit protein uS8.